The following is a 213-amino-acid chain: Probable nicotinate-nucleotide adenylyltransferase (213 aa).

It belongs to the NadD family.

The enzyme catalyses nicotinate beta-D-ribonucleotide + ATP + H(+) = deamido-NAD(+) + diphosphate. The protein operates within cofactor biosynthesis; NAD(+) biosynthesis; deamido-NAD(+) from nicotinate D-ribonucleotide: step 1/1. Its function is as follows. Catalyzes the reversible adenylation of nicotinate mononucleotide (NaMN) to nicotinic acid adenine dinucleotide (NaAD). This is Probable nicotinate-nucleotide adenylyltransferase from Citrobacter koseri (strain ATCC BAA-895 / CDC 4225-83 / SGSC4696).